Reading from the N-terminus, the 914-residue chain is Dynamin-2A (914 aa).

At Met1 the chain carries N-acetylmethionine. The 269-residue stretch at Pro35 to Pro303 folds into the Dynamin-type G domain. A G1 motif region spans residues Gly45 to Ser52. Gly45–Ser52 lines the GTP pocket. Residues Ala71–Arg73 are G2 motif. Residues Asp143–Gly146 form a G3 motif region. Residues Asp143 to Leu147 and Gly204 to Asp207 contribute to the GTP site. Residues Gly204 to Asp207 are G4 motif. The interval Ala238–Gly241 is G5 motif. The span at Arg507 to Asp522 shows a compositional bias: basic and acidic residues. 2 disordered regions span residues Arg507–Pro570 and Pro629–Asp648. Over residues Ala523 to Gln535 the composition is skewed to polar residues. Basic and acidic residues-rich tracts occupy residues Ser547–Pro560 and Glu634–Asn645. Residues Gly572–Gln696 form the PH domain. One can recognise a GED domain in the interval Leu730–Ala823. Residues Asn781–Ser805 are a coiled coil. The interval Arg821 to Tyr914 is disordered. Polar residues-rich tracts occupy residues Ser826 to Arg839 and Ala852 to Lys866.

It belongs to the TRAFAC class dynamin-like GTPase superfamily. Dynamin/Fzo/YdjA family. Binds PtdIns3P. Interacts with SH3P3 (via SH3 domain) and (via C-terminus) with GAMMA-ADR. May homooligomerize or heterooligomerize.

Its subcellular location is the cytoplasm. The protein resides in the cytosol. The protein localises to the golgi apparatus membrane. It is found in the cytoskeleton. It localises to the phragmoplast. Its subcellular location is the cytoplasmic vesicle. The protein resides in the clathrin-coated vesicle. The enzyme catalyses GTP + H2O = GDP + phosphate + H(+). Its activity is regulated as follows. Increased GTPase activity in the presence of phosphatidic acid. In terms of biological role, microtubule-associated force-producing protein involved in clathrin-mediated vesicle trafficking from the trans-Golgi network to the central vacuole. Able to bind and hydrolyze GTP. Binds specifically to phosphatidylinositol 3-phosphate (PtdIns3P). This is Dynamin-2A (DRP2A) from Arabidopsis thaliana (Mouse-ear cress).